Consider the following 458-residue polypeptide: Cell division protein FtsZ (458 aa).

GTP is bound by residues 22–26 (GAGGN), 109–111 (GTG), glutamate 140, arginine 144, and aspartate 188. Positions 319–458 (KAEEEASKQP…IPFFKHRRQD (140 aa)) are disordered. Residues 368–379 (NTISHEAPTQSI) are compositionally biased toward polar residues. Over residues 401-418 (KQDRKENNRPQPVENKEK) the composition is skewed to basic and acidic residues. A compositionally biased stretch (low complexity) spans 425–439 (SFSSDDSTSISQIET).

This sequence belongs to the FtsZ family. In terms of assembly, homodimer. Polymerizes to form a dynamic ring structure in a strictly GTP-dependent manner. Interacts directly with several other division proteins.

It is found in the cytoplasm. In terms of biological role, essential cell division protein that forms a contractile ring structure (Z ring) at the future cell division site. The regulation of the ring assembly controls the timing and the location of cell division. One of the functions of the FtsZ ring is to recruit other cell division proteins to the septum to produce a new cell wall between the dividing cells. Binds GTP and shows GTPase activity. This Lactobacillus johnsonii (strain CNCM I-12250 / La1 / NCC 533) protein is Cell division protein FtsZ.